We begin with the raw amino-acid sequence, 959 residues long: Bifunctional premutilin synthase (959 aa).

A class II diterpene cyclase region spans residues 1–542; the sequence is MGLSEDLHAR…ALNVPIPRFD (542 aa). The DXDD motif motif lies at 309–312; sequence DADM. Aspartate 311 serves as the catalytic For class II diterpene cyclase activity. Residues 543-959 are class I diterpene synthase; it reads PASITTLPPI…TANGSNGIHH (417 aa). The For class I diterpene synthase activity role is filled by aspartate 649. Residues aspartate 649, aspartate 653, and asparagine 824 each coordinate Mg(2+). Residues 649-653 carry the DDXXD motif motif; it reads DDYLD. The disordered stretch occupies residues 931–959; sequence KGANGVKKTNGLTTNGTKATANGSNGIHH. The segment covering 934–959 has biased composition (low complexity); that stretch reads NGVKKTNGLTTNGTKATANGSNGIHH.

This sequence belongs to the terpene synthase family. Mg(2+) is required as a cofactor.

It participates in secondary metabolite biosynthesis; terpenoid biosynthesis. Its function is as follows. Bifunctional premutilin synthase; part of the gene cluster that mediates the biosynthesis of pleuromutilin, a tricyclic diterpene showing antibacterial properties. The geranylgeranyl diphosphate (GGPP) synthase ple4 catalyzes the first step in pleuromutilin biosynthesis. GGPP is then substrate of the premutilin synthase (PS) ple3 to yield premutilin. Premutilin synthase is a bifunctional enzyme composed of the fusion of a class II diterpene cyclase (DTC) and a class I diterpene synthase (DTS), with the corresponding domains and active sites containing characteristic aspartate-rich motifs. GGPP is first converted to mutildienyl-diphosphate (MPP) at the class II DTC site. MPP is subsequently further cyclized at the class I DTS site, followed by a 1,5-hydride shift and addition of water prior to terminating deprotonation, to yield premutilin. The cytochrome P450 monooxygenases ple5 and ple6 hydroxylate premutilin at C-11 and C-3, respectively, producing 11-hydroxypremutilin and 3-hydroxypremutilin. The combination of the actions of both ple5 and ple6 leads to the production of 3,11-dihydroxypremutilin. The short chain dehydrogenase ple7 further converts 3,11-dihydroxypremutilin into mutilin. The acetyltransferase ple2 then acetylates mutilin to produce 14-O-acetylmutilin. Finally, the cytochrome P450 monooxygenase ple1 catalyzes hydroxylation on the alpha position of the acetyl side chain of 14-O-acetylmutilin to yield pleuromutilin. This chain is Bifunctional premutilin synthase, found in Rhodocybe pseudopiperita (Clitopilus pseudopiperitus).